Reading from the N-terminus, the 290-residue chain is Fat storage-inducing transmembrane protein 1 (290 aa).

The Lumenal segment spans residues 1–18 (MERGPVVGAGLGARARIR). Residues 19 to 39 (TLLGCLVKVLLWVASALLYFG) traverse the membrane as a helical segment. The Cytoplasmic portion of the chain corresponds to 40 to 54 (SEQAARLLGSPCLRR). The helical transmembrane segment at 55–75 (LYHAWLAAVVIFGPLLQFHVN) threads the bilayer. Topologically, residues 76–94 (PRTIFASHGNFFNIKFVNS) are lumenal. A helical transmembrane segment spans residues 95 to 115 (AWGWTCTFLGGFVLLVVFLAT). Over 116-141 (RRVAVTARHLSRLVVGAAVWRGAGRA) the chain is Cytoplasmic. Residues 142-162 (FLLIEDLTGSCFEPLPQGLLL) form a helical membrane-spanning segment. Over 163-187 (HELPDRRSRLAAGHQWRGYTVSSHT) the chain is Lumenal. Histidine 186 is an active-site residue. A helical transmembrane segment spans residues 188 to 208 (FLLTFCCLLMAEEAAVFAKYL). The Cytoplasmic portion of the chain corresponds to 209–220 (AHGLPAGAPLRL). A helical membrane pass occupies residues 221-241 (VFLLNVLLLGLWNFLLLCTVI). The Lumenal portion of the chain corresponds to 242-249 (YFHQYTHK). Histidine 244 is an active-site residue. The chain crosses the membrane as a helical span at residues 250-270 (VVGAAVGTFAWYLTYGSWYHQ). The Cytoplasmic segment spans residues 271–290 (PWSPGSPGHGLFTHPSRKHN).

Belongs to the FIT family. FIT1 subfamily.

It localises to the endoplasmic reticulum membrane. Plays an important role in the formation of lipid droplets (LDs) which are storage organelles at the center of lipid and energy homeostasis. Directly binds to diacylglycerol (DAGs) and triacylglycerol. The sequence is that of Fat storage-inducing transmembrane protein 1 from Sus scrofa (Pig).